The following is a 604-amino-acid chain: Prostaglandin G/H synthase 2 (604 aa).

Positions 1-17 (MLARALLLCAVLALSHT) are cleaved as a signal peptide. The region spanning 18 to 55 (ANPCCSHPCQNRGVCMSVGFDQYKCDCTRTGFYGENCS) is the EGF-like domain. 4 disulfide bridges follow: Cys-21/Cys-32, Cys-22/Cys-145, Cys-26/Cys-42, and Cys-44/Cys-54. Asn-53 carries N-linked (GlcNAc...) asparagine glycosylation. Arg-106 lines the substrate pocket. An N-linked (GlcNAc...) asparagine glycan is attached at Asn-130. The active-site Proton acceptor is His-193. Substrate is bound at residue Tyr-341. Catalysis depends on Tyr-371, which acts as the For cyclooxygenase activity. His-374 provides a ligand contact to heme b. An N-linked (GlcNAc...) asparagine glycan is attached at Asn-396. At Cys-526 the chain carries S-nitrosocysteine. A disulfide bridge links Cys-555 with Cys-561. Ser-565 carries the post-translational modification O-acetylserine. Asn-580 is a glycosylation site (N-linked (GlcNAc...) asparagine).

This sequence belongs to the prostaglandin G/H synthase family. In terms of assembly, homodimer. Heme b is required as a cofactor. In terms of processing, S-nitrosylation by NOS2 (iNOS) activates enzyme activity. S-nitrosylation may take place on different Cys residues in addition to Cys-526. Acetylated at Ser-565 by SPHK1. During neuroinflammation, acetylation by SPHK1 promotes neuronal secretion of specialized preresolving mediators (SPMs), especially 15-R-lipoxin A4, which results in an increase of phagocytic microglia.

Its subcellular location is the microsome membrane. The protein resides in the endoplasmic reticulum membrane. It is found in the nucleus inner membrane. It localises to the nucleus outer membrane. It carries out the reaction (5Z,8Z,11Z,14Z)-eicosatetraenoate + AH2 + 2 O2 = prostaglandin H2 + A + H2O. It catalyses the reaction (5Z,8Z,11Z,14Z)-eicosatetraenoate + 2 O2 = prostaglandin G2. The enzyme catalyses prostaglandin G2 + AH2 = prostaglandin H2 + A + H2O. The catalysed reaction is (5Z,8Z,11Z,14Z,17Z)-eicosapentaenoate + 2 O2 = prostaglandin G3. It carries out the reaction prostaglandin G3 + AH2 = prostaglandin H3 + A + H2O. It catalyses the reaction (8Z,11Z,14Z)-eicosatrienoate + 2 O2 = prostaglandin G1. The enzyme catalyses prostaglandin G1 + AH2 = prostaglandin H1 + A + H2O. The catalysed reaction is 2-(5Z,8Z,11Z,14Z)-eicosatetraenoyl-sn-glycero-3-phosphoethanolamine + 2 O2 = 2-(prostaglandin G2)-sn-glycero-3-phosphoethanolamine. It carries out the reaction 2-(prostaglandin G2)-sn-glycero-3-phosphoethanolamine + AH2 = 2-(prostaglandin H2)-sn-glycero-3-phosphoethanolamine + A + H2O. It catalyses the reaction 2-(5Z,8Z,11Z,14Z)-eicosatetraenoyl-sn-glycero-3-phosphocholine + 2 O2 = 2-(prostaglandin G2)-sn-glycero-3-phosphocholine. The enzyme catalyses 2-(prostaglandin G2)-sn-glycero-3-phosphocholine + AH2 = 2-(prostaglandin H2)-sn-glycero-3-phosphocholine + A + H2O. The catalysed reaction is (15S)-hydroperoxy-(5Z,8Z,11Z,13E)-eicosatetraenoate + AH2 = (15S)-hydroxy-(5Z,8Z,11Z,13E)-eicosatetraenoate + A + H2O. It carries out the reaction 2-(5Z,8Z,11Z,14Z)-eicosatetraenoyl-sn-glycero-3-phosphocholine + AH2 + O2 = 2-[(15S)-hydroxy-(5Z,8Z,11Z,13E)-eicosatetraenoyl]-sn-glycero-3-phosphocholine + A + H2O. It catalyses the reaction 2-(5Z,8Z,11Z,14Z)-eicosatetraenoyl-sn-glycero-3-phosphocholine + AH2 + O2 = 2-[(15R)-hydroxy-(5Z,8Z,11Z,13E)-eicosatetraenoyl]-sn-glycero-3-phosphocholine + A + H2O. The enzyme catalyses 2-(5Z,8Z,11Z,14Z)-eicosatetraenoyl-sn-glycero-3-phosphocholine + AH2 + O2 = 2-[(11R)-hydroxy-(5Z,8Z,12E,14Z)-eicosatetraenoyl]-sn-glycero-3-phosphocholine + A + H2O. The catalysed reaction is (9Z,12Z)-octadecadienoate + AH2 + O2 = 9-hydroxy-(10E,12Z)-octadecadienoate + A + H2O. It carries out the reaction (9Z,12Z)-octadecadienoate + AH2 + O2 = 13-hydroxy-(9Z,11E)-octadecadienoate + A + H2O. It catalyses the reaction (5Z,8Z,11Z,14Z)-eicosatetraenoate + AH2 + O2 = (15R)-hydroxy-(5Z,8Z,11Z,13E)-eicosatetraenoate + A + H2O. The enzyme catalyses (5Z,8Z,11Z,14Z)-eicosatetraenoate + AH2 + O2 = (11R)-hydroxy-(5Z,8Z,12E,14Z)-eicosatetraenoate + A + H2O. The catalysed reaction is (5Z,8Z,11Z,14Z,17Z)-eicosapentaenoate + AH2 + O2 = (11R)-hydroxy-(5Z,8Z,12E,14Z,17Z)-eicosapentaenoate + A + H2O. It carries out the reaction (5Z,8Z,11Z,14Z,17Z)-eicosapentaenoate + AH2 + O2 = (18S)-hydroxy-(5Z,8Z,11Z,14Z,16E)-eicosapentaenoate + A + H2O. It catalyses the reaction (5Z,8Z,11Z,14Z,17Z)-eicosapentaenoate + AH2 + O2 = (18R)-hydroxy-(5Z,8Z,11Z,14Z,16E)-eicosapentaenoate + A + H2O. The enzyme catalyses (5Z,8Z,11Z,14Z,17Z)-eicosapentaenoate + AH2 + O2 = (15R)-hydroxy-(5Z,8Z,11Z,13E,17Z)-eicosapentaenoate + A + H2O. The catalysed reaction is (5Z,8Z,11Z,14Z,17Z)-eicosapentaenoate + AH2 + O2 = (15S)-hydroxy-(5Z,8Z,11Z,13E,17Z)-eicosapentaenoate + A + H2O. It carries out the reaction (7Z,10Z,13Z,16Z,19Z)-docosapentaenoate + AH2 + O2 = 13R-hydroxy-(7Z,10Z,14E,16Z,19Z)-docosapentaenoate + A + H2O. It catalyses the reaction (4Z,7Z,10Z,13Z,16Z,19Z)-docosahexaenoate + AH2 + O2 = 13-hydroxy-(4Z,7Z,10Z,14E,16Z,19Z)-docosahexaenoate + A + H2O. The enzyme catalyses (5S)-hydroxy-(6E,8Z,11Z,14Z)-eicosatetraenoate + AH2 + O2 = (5S,15R)-dihydroxy-(6E,8Z,11Z,13E)-eicosatetraenoate + A + H2O. The catalysed reaction is (4Z,7Z,10Z,13Z,16Z,19Z)-docosahexaenoate + AH2 + O2 = 17R-hydroxy-(4Z,7Z,10Z,13Z,15E,19Z)-docosahexaenoate + A + H2O. It carries out the reaction (5S)-hydroxy-(6E,8Z,11Z,14Z)-eicosatetraenoate + AH2 + O2 = (5S,15S)-dihydroxy-(6E,8Z,11Z,13E)-eicosatetraenoate + A + H2O. It catalyses the reaction (5S)-hydroxy-(6E,8Z,11Z,14Z)-eicosatetraenoate + AH2 + O2 = (5S,11R)-dihydroxy-(6E,8Z,12E,14Z)-eicosatetraenoate + A + H2O. The enzyme catalyses 2-(5Z,8Z,11Z,14Z-eicosatetraenoyl)-glycerol + 2 O2 = 2-glyceryl-prostaglandin G2. The catalysed reaction is 2-glyceryl-prostaglandin G2 + AH2 = 2-glyceryl-prostaglandin H2 + A + H2O. It carries out the reaction (5Z,8Z,11Z,14Z)-eicosatetraenoate + O2 = (15R)-hydroperoxy-(5Z,8Z,11Z,13E)-eicosatetraenoate. It catalyses the reaction (5Z,8Z,11Z,14Z)-eicosatetraenoate + O2 = 11R-hydroperoxy-(5Z,8Z,12E,14Z)-eicosatetraenoate. The enzyme catalyses (9Z,12Z)-octadecadienoate + AH2 + O2 = (9R)-hydroxy-(10E,12Z)-octadecadienoate + A + H2O. The catalysed reaction is (9Z,12Z)-octadecadienoate + AH2 + O2 = (9S)-hydroxy-(10E,12Z)-octadecadienoate + A + H2O. It carries out the reaction (9Z,12Z)-octadecadienoate + AH2 + O2 = (13S)-hydroxy-(9Z,11E)-octadecadienoate + A + H2O. It catalyses the reaction (9Z,12Z)-octadecadienoate + AH2 + O2 = (13R)-hydroxy-(9Z,11E)-octadecadienoate + A + H2O. It participates in lipid metabolism; prostaglandin biosynthesis. With respect to regulation, the cyclooxygenase activity is inhibited by nonsteroidal anti-inflammatory drugs (NSAIDs) including aspirin, ibuprofen, flurbiprofen, celecoxib, flufenamic, mefenamic and tolfenamic acids as well as by hydroperoxide scavenger erythrocyte glutathione peroxidase GPX1. Aspirin triggers enzyme acetylation turning off its ability to generate pro-inflammatory prostaglandins, but switches on its capacity to produce anti-inflammatory lipid mediators involved in inflammation resolution. Aspirin enhances lipoxygenase-type activity toward production of epimers with R stereochemistry such as 15R-HETE, 18R-HEPE, 15R-HEPE and 17R-HDHA. Atorvastatin, a cholesterol-lowering drug, triggers enzyme S-nitrosylation increasing production of 13-series resolvins (RvTs). Its function is as follows. Dual cyclooxygenase and peroxidase in the biosynthesis pathway of prostanoids, a class of C20 oxylipins mainly derived from arachidonate ((5Z,8Z,11Z,14Z)-eicosatetraenoate, AA, C20:4(n-6)), with a particular role in the inflammatory response. The cyclooxygenase activity oxygenates AA to the hydroperoxy endoperoxide prostaglandin G2 (PGG2), and the peroxidase activity reduces PGG2 to the hydroxy endoperoxide prostaglandin H2 (PGH2), the precursor of all 2-series prostaglandins and thromboxanes. This complex transformation is initiated by abstraction of hydrogen at carbon 13 (with S-stereochemistry), followed by insertion of molecular O2 to form the endoperoxide bridge between carbon 9 and 11 that defines prostaglandins. The insertion of a second molecule of O2 (bis-oxygenase activity) yields a hydroperoxy group in PGG2 that is then reduced to PGH2 by two electrons. Similarly catalyzes successive cyclooxygenation and peroxidation of dihomo-gamma-linoleate (DGLA, C20:3(n-6)) and eicosapentaenoate (EPA, C20:5(n-3)) to corresponding PGH1 and PGH3, the precursors of 1- and 3-series prostaglandins. In an alternative pathway of prostanoid biosynthesis, converts 2-arachidonoyl lysophopholipids to prostanoid lysophopholipids, which are then hydrolyzed by intracellular phospholipases to release free prostanoids. Metabolizes 2-arachidonoyl glycerol yielding the glyceryl ester of PGH2, a process that can contribute to pain response. Generates lipid mediators from n-3 and n-6 polyunsaturated fatty acids (PUFAs) via a lipoxygenase-type mechanism. Oxygenates PUFAs to hydroperoxy compounds and then reduces them to corresponding alcohols. Plays a role in the generation of resolution phase interaction products (resolvins) during both sterile and infectious inflammation. Metabolizes docosahexaenoate (DHA, C22:6(n-3)) to 17R-HDHA, a precursor of the D-series resolvins (RvDs). As a component of the biosynthetic pathway of E-series resolvins (RvEs), converts eicosapentaenoate (EPA, C20:5(n-3)) primarily to 18S-HEPE that is further metabolized by ALOX5 and LTA4H to generate 18S-RvE1 and 18S-RvE2. In vascular endothelial cells, converts docosapentaenoate (DPA, C22:5(n-3)) to 13R-HDPA, a precursor for 13-series resolvins (RvTs) shown to activate macrophage phagocytosis during bacterial infection. In activated leukocytes, contributes to oxygenation of hydroxyeicosatetraenoates (HETE) to diHETES (5,15-diHETE and 5,11-diHETE). Can also use linoleate (LA, (9Z,12Z)-octadecadienoate, C18:2(n-6)) as substrate and produce hydroxyoctadecadienoates (HODEs) in a regio- and stereospecific manner, being (9R)-HODE ((9R)-hydroxy-(10E,12Z)-octadecadienoate) and (13S)-HODE ((13S)-hydroxy-(9Z,11E)-octadecadienoate) its major products. During neuroinflammation, plays a role in neuronal secretion of specialized preresolving mediators (SPMs) 15R-lipoxin A4 that regulates phagocytic microglia. The polypeptide is Prostaglandin G/H synthase 2 (Homo sapiens (Human)).